The following is a 391-amino-acid chain: Succinyl-diaminopimelate desuccinylase (391 aa).

Zn(2+) is bound at residue H67. The active site involves D69. D101 contributes to the Zn(2+) binding site. E135 (proton acceptor) is an active-site residue. Positions 136, 164, and 353 each coordinate Zn(2+).

The protein belongs to the peptidase M20A family. DapE subfamily. Homodimer. It depends on Zn(2+) as a cofactor. Co(2+) serves as cofactor.

It catalyses the reaction N-succinyl-(2S,6S)-2,6-diaminopimelate + H2O = (2S,6S)-2,6-diaminopimelate + succinate. Its pathway is amino-acid biosynthesis; L-lysine biosynthesis via DAP pathway; LL-2,6-diaminopimelate from (S)-tetrahydrodipicolinate (succinylase route): step 3/3. Catalyzes the hydrolysis of N-succinyl-L,L-diaminopimelic acid (SDAP), forming succinate and LL-2,6-diaminopimelate (DAP), an intermediate involved in the bacterial biosynthesis of lysine and meso-diaminopimelic acid, an essential component of bacterial cell walls. This Rickettsia bellii (strain OSU 85-389) protein is Succinyl-diaminopimelate desuccinylase.